Consider the following 78-residue polypeptide: Large ribosomal subunit protein bL28 (78 aa).

The protein belongs to the bacterial ribosomal protein bL28 family.

The polypeptide is Large ribosomal subunit protein bL28 (Legionella pneumophila (strain Paris)).